A 762-amino-acid chain; its full sequence is ABC-type oligopeptide transporter ABCB9 (762 aa).

8 helical membrane-spanning segments follow: residues 7–27, 47–67, 84–104, 116–136, 181–201, 221–241, 315–335, and 412–432; these read VVVT…IYAF, VLDL…ATIG, LVIT…LLLF, FWAL…LWGL, VAFL…ETFL, FTTA…AAGI, VFMF…FPII, and SGLT…HLVI. The 284-residue stretch at 184–467 folds into the ABC transmembrane type-1 domain; that stretch reads LVAASFFLIV…VGSVYSGLMQ (284 aa). In terms of domain architecture, ABC transporter spans 500–736; it reads VDFENVTFTY…GGLYAKLVQR (237 aa). Residue 535–542 participates in ATP binding; sequence GPSGSGKS.

It belongs to the ABC transporter superfamily. ABCB family. MHC peptide exporter (TC 3.A.1.209) subfamily. Homodimer. Interacts (via TMD0 region) with LAMP1; this interaction strongly stabilizes ABCB9 and protects ABCB9 against lysosomal degradation. Interacts (via TMD0 region) with LAMP2 (isoform LAMP-2B). Interacts (via TMD0) with YIF1B; this interaction allows (but is not essential) the ER-to-Golgi trafficking and strongly depends on a salt bridge within TMD0. As to expression, found in testis, particularly in the Sertoli cells of the seminiferous tubules. Also expressed in kidney, brain, heart, lung, spleen, thymus, intestine and testis. Higher expression detected in brain and testis than in thymus and intestine.

It is found in the lysosome membrane. It carries out the reaction a [oligopeptide](in) + ATP + H2O = a [oligopeptide](out) + ADP + phosphate + H(+). ATP-dependent low-affinity peptide transporter which translocates a broad spectrum of peptides from the cytosol to the lysosomal lumen for degradation. Displays a broad peptide length specificity from 6-mer up to at least 59-mer peptides with an optimum of 23-mers. Binds and transports smaller and larger peptides with the same affinity. Favors positively charged, aromatic or hydrophobic residues in the N- and C-terminal positions whereas negatively charged residues as well as asparagine and methionine are not favored. The polypeptide is ABC-type oligopeptide transporter ABCB9 (Rattus norvegicus (Rat)).